A 93-amino-acid polypeptide reads, in one-letter code: Putative hemolysin E-like protein (93 aa).

This sequence belongs to the hemolysin E family.

This Escherichia coli O6:H1 (strain CFT073 / ATCC 700928 / UPEC) protein is Putative hemolysin E-like protein.